The primary structure comprises 602 residues: MSERRRSAVALSSRAHAFSVEALIGSNKKRKLRDWEEKGLDLSMEALSPAGPLGDTDDPATHGLEPHPDSEQSTGSDSEVLTERTSCSFSTHTDLASGAAGPVPAAMSSMEEIQVELQCADLWKRFHDIGTEMIITKAGRRMFPAMRVKITGLDPHQQYYIAMDIVPVDNKRYRYVYHSSKWMVAGNADSPVPPRVYIHPDSLASGDTWMRQVVSFDKLKLTNNELDDQGHIILHSMHKYQPRVHVIRKDFSSDLSPTKPVPVGDGVKTFNFPETVFTTVTAYQNQQITRLKIDRNPFAKGFRDSGRNRTGLEAIMETYAFWRPPVRTLTFEDFTTMQKQQGGSTGTSPTTSSTGTPSPSASSHLLSPSCSPPTFHLAPNTFNVGCRESQLCNLNLSDYPPCARSNMAALQSYPGLSDSGYNRLQSGTASATQPSETFMPQRTPSLISGIPTPPSLPSNSKMEAYGGQLGSFPTSQFQYVMQAGNAASSSSSPHMFGGSHMQQSSYNAFSLHNPYNLYGYNFPTSPRLAASPEKLSASQSTLLCSSPSNGAFGERQYLPTGMEHSMHMISPSTNNQQATNTCDGRQYGAVPGSASQMSVHMV.

Residues 43-95 are disordered; the sequence is SMEALSPAGPLGDTDDPATHGLEPHPDSEQSTGSDSEVLTERTSCSFSTHTDL. The segment covering 71-94 has biased composition (polar residues); sequence EQSTGSDSEVLTERTSCSFSTHTD. The T-box DNA-binding region spans 122-304; that stretch reads LWKRFHDIGT…RNPFAKGFRD (183 aa). Residue threonine 330 is modified to Phosphothreonine. Disordered stretches follow at residues 338-369 and 425-444; these read QKQQGGSTGTSPTTSSTGTPSPSASSHLLSPS and QSGTASATQPSETFMPQRTP. A compositionally biased stretch (low complexity) spans 346 to 369; sequence GTSPTTSSTGTPSPSASSHLLSPS.

In terms of assembly, can form a heterodimer with TBX18.

Its subcellular location is the nucleus. Probable transcriptional regulator involved in the development of the skeleton of the limb, vertebral column and head. Acts by controlling the number of mesenchymal precursor cells and chondrocytes. The polypeptide is T-box transcription factor TBX15 (Tbx15) (Mus musculus (Mouse)).